A 632-amino-acid polypeptide reads, in one-letter code: Mitoguardin 1 (632 aa).

Residues 70–90 (PVAKKLFVVTAVSAISVIFLA) form a helical membrane-spanning segment. 2 positions are modified to phosphoserine: Ser-289 and Ser-293.

The protein belongs to the mitoguardin family. As to quaternary structure, homodimer and heterodimer; forms heterodimers with MIGA2. Interacts with PLD6/MitoPLD.

It is found in the mitochondrion outer membrane. Its function is as follows. Regulator of mitochondrial fusion: acts by forming homo- and heterodimers at the mitochondrial outer membrane and facilitating the formation of PLD6/MitoPLD dimers. May act by regulating phospholipid metabolism via PLD6/MitoPLD. In Homo sapiens (Human), this protein is Mitoguardin 1.